The following is a 156-amino-acid chain: Ribosomal RNA large subunit methyltransferase H (156 aa).

S-adenosyl-L-methionine-binding positions include Leu73, Gly104, and Leu123–Leu128.

Belongs to the RNA methyltransferase RlmH family. Homodimer.

It is found in the cytoplasm. The enzyme catalyses pseudouridine(1915) in 23S rRNA + S-adenosyl-L-methionine = N(3)-methylpseudouridine(1915) in 23S rRNA + S-adenosyl-L-homocysteine + H(+). Functionally, specifically methylates the pseudouridine at position 1915 (m3Psi1915) in 23S rRNA. The chain is Ribosomal RNA large subunit methyltransferase H from Serratia proteamaculans (strain 568).